The following is a 104-amino-acid chain: Large ribosomal subunit protein bL27 (104 aa).

A propeptide spanning residues 1–15 (MNNKYFLTKIDLQFF) is cleaved from the precursor.

This sequence belongs to the bacterial ribosomal protein bL27 family. In terms of processing, the N-terminus is cleaved by ribosomal processing cysteine protease Prp.

This Mycoplasma pneumoniae (strain ATCC 29342 / M129 / Subtype 1) (Mycoplasmoides pneumoniae) protein is Large ribosomal subunit protein bL27.